Reading from the N-terminus, the 1680-residue chain is Sodium channel protein type 7 subunit alpha (1680 aa).

Residues 1 to 117 are Cytoplasmic-facing; it reads MLTSPEPKGL…RRAVIKVLVH (117 aa). An I repeat occupies 100-401; it reads TLSPLSSLRR…ILTMAYEQEK (302 aa). A helical membrane pass occupies residues 118–137; sequence PLFRLLILISVLTDSILMCM. Topologically, residues 138-141 are extracellular; that stretch reads SNLP. Residues 142–167 traverse the membrane as a helical segment; that stretch reads EWILAVENTLLGIYTFEILVKVIARG. Over 168-178 the chain is Cytoplasmic; that stretch reads IWAGSFSFLGD. Residues 179 to 196 form a helical membrane-spanning segment; that stretch reads LWNWLDFSVTLFELITRS. Residues 197–200 lie on the Extracellular side of the membrane; it reads SPLS. Residues 201 to 219 form a helical membrane-spanning segment; the sequence is SLPMFKTIRTLRILKIIPL. Residues 220–237 are Cytoplasmic-facing; the sequence is NHGLQSIVVTLVQCLKKL. Residues 238 to 259 form a helical membrane-spanning segment; sequence LGAIALALFFLTVSSLFGMGLF. Topologically, residues 260-338 are extracellular; the sequence is MGNLKHKCVR…PDNGFTSFDN (79 aa). A disulfide bridge connects residues Cys-267 and Cys-307. N-linked (GlcNAc...) asparagine glycans are attached at residues Asn-281 and Asn-309. An intramembrane region (pore-forming) is located at residues 339-366; that stretch reads FGWALLAMFRLMTQDYPELLYHQILYAS. Gly-367 is a topological domain (extracellular). Residues 368–407 traverse the membrane as a helical segment; sequence KIYMIFFVLISFWFAFYMASLFLGILTMAYEQEKQRASEE. Residues 408-505 lie on the Cytoplasmic side of the membrane; sequence SRDMDSKCHQ…EFADRIITHP (98 aa). Residues 487 to 756 form an II repeat; the sequence is CSPCWIKLNE…QLAVAWIKMV (270 aa). The chain crosses the membrane as a helical span at residues 506-521; the sequence is LFDLFLVICIILNICF. The Extracellular portion of the chain corresponds to 522–530; it reads LALEHFPMS. The helical transmembrane segment at 531–559 threads the bilayer; that stretch reads EELMSLLAIGNLVFIGIYTIEMILKIIAM. The Cytoplasmic segment spans residues 560 to 568; it reads HPYGYFQIS. The chain crosses the membrane as a helical span at residues 569 to 586; sequence WHIFDSILVVLGLTEMLL. The Extracellular segment spans residues 587 to 592; it reads ADIEEI. The chain crosses the membrane as a helical span at residues 593 to 608; it reads TVFILVPLIFIKLGKY. The Cytoplasmic segment spans residues 609–625; it reads APPFKNLMRILGRALVA. Residues 626 to 654 form a helical membrane-spanning segment; that stretch reads LKDLVLLVSIFIYFSAVFGMKLFGRSYKD. Over 655–672 the chain is Extracellular; it reads CVCHVDQDCQRQRWHMSD. 2 disulfide bridges follow: Cys-657-Cys-663 and Cys-695-Cys-704. The pore-forming intramembrane region spans 673–699; sequence FLHAYVTVFRILCGEWIETLWECMEVA. Residue Gly-700 is a topological domain, extracellular. Residues 701-731 form a helical membrane-spanning segment; that stretch reads EAWCIPFYMMVILIGNLLILYLFVALVSSFA. The Cytoplasmic portion of the chain corresponds to 732–933; it reads SYDATTEVSK…KTCCKIVENS (202 aa). A compositionally biased stretch (polar residues) spans 807–833; sequence DQSSGTEKTPVTESESQSLIASPSVSE. The disordered stretch occupies residues 807–874; that stretch reads DQSSGTEKTP…MKQSSSSECS (68 aa). Phosphoserine is present on Ser-842. Residues 915–1223 form an III repeat; sequence NGKIWRNIRK…KKQYRALKKL (309 aa). The helical transmembrane segment at 934-952 threads the bilayer; it reads WFECFIGLVTLLCTGTLAL. Residues 953–960 are Extracellular-facing; that stretch reads EDIYIDQR. A helical transmembrane segment spans residues 961–989; sequence KTIKIFLEYGDMIFAYIFILEMLLKWVAY. Over 990–997 the chain is Cytoplasmic; it reads GFKAYFSN. A helical transmembrane segment spans residues 998-1019; the sequence is NWYKLDFMVVIVLCLSLIGKTR. A topological domain (extracellular) is located at residue Glu-1020. The chain crosses the membrane as a helical span at residues 1021 to 1039; the sequence is DLNPLASIKFLRALRVLSQ. Topologically, residues 1040-1054 are cytoplasmic; sequence FERMKVVLRALIKTT. The helical transmembrane segment at 1055–1079 threads the bilayer; that stretch reads LPAVSVFLVCLMIWLLFSVMGVFLF. The Extracellular portion of the chain corresponds to 1080 to 1126; it reads AGKFYECIDPTRGERFSVFEVMNKSQCENLVFNESMPWENAKLNFDN. A disulfide bridge links Cys-1086 with Cys-1106. N-linked (GlcNAc...) asparagine glycosylation is found at Asn-1102 and Asn-1112. The pore-forming intramembrane region spans 1127–1153; it reads VGNGFLSLFQVATFNGWISIMNSAIDS. At 1154-1166 the chain is on the extracellular side; sequence VGVYMQPSFEHSL. The helical transmembrane segment at 1167 to 1201 threads the bilayer; it reads HMYTYFIIFVVFGLFLPLCMLIGVIIRNFNKQKIK. The Cytoplasmic segment spans residues 1202–1249; that stretch reads QGGSNIFITVKQKKQYRALKKLLYADSQKPAARPRNKFQGFICDVVTH. One copy of the IV repeat lies at 1232-1530; it reads AARPRNKFQG…WNRFDPDRTQ (299 aa). Residues 1250–1271 traverse the membrane as a helical segment; it reads RVFNVIIILLICFQATTIMIQN. The Extracellular segment spans residues 1272–1275; it reads DEQS. Residues 1276–1304 traverse the membrane as a helical segment; that stretch reads PQIETAVFWMNSLFTMLFTLECILKLTAF. The Cytoplasmic portion of the chain corresponds to 1305 to 1311; sequence RCHYFTS. A helical membrane pass occupies residues 1312 to 1337; it reads AWNVHDFMVVVFSITGLLLPLSIGQY. At 1338–1340 the chain is on the extracellular side; the sequence is FVP. Residues 1341 to 1361 traverse the membrane as a helical segment; that stretch reads PSLVQLLLLSRIIHVLRPGKG. Residues 1362–1376 lie on the Cytoplasmic side of the membrane; sequence PKVFHDLMLPLMLSL. Residues 1377 to 1401 form a helical membrane-spanning segment; the sequence is PALLNIALLIFLVMFIYAIFGMYNF. Residues 1402–1419 lie on the Extracellular side of the membrane; it reads AYVKKEAGINDVSNFETF. The segment at residues 1420–1443 is an intramembrane region (pore-forming); that stretch reads GSSMLCLFQVTTFSGWDGMLDAIF. The Extracellular portion of the chain corresponds to 1444–1467; it reads NSQWSDCDPDKINPGTQVRGDCGS. A disulfide bond links Cys-1450 and Cys-1465. The chain crosses the membrane as a helical span at residues 1468–1503; that stretch reads PSVGIFYFVSYILISWLIIVNMYVVLIMEFLSIPSK. Residues 1504-1680 are Cytoplasmic-facing; sequence RKNRTLSEDD…EEKASIQTQI (177 aa). The interval 1646-1680 is disordered; the sequence is KIQDIPEIDDGREDPNSKGVHSGQIEEKASIQTQI.

It belongs to the sodium channel (TC 1.A.1.10) family. SCN7A subfamily. As to quaternary structure, the sodium channel formed by SCN7A is probably a heterooligomeric complex consisting of the ion conducting pore forming alpha subunit SCN7A and regulatory beta subunits such as SCN3B. Interacts with ATP1A1; activates ATP1A1 and thereby indirectly signals to nearby neurons to regulate sodium homeostasis. As to expression, not tissue specific but widely expressed.

The protein localises to the cell membrane. The enzyme catalyses Na(+)(in) = Na(+)(out). In terms of biological role, sodium leak channel functioning as an osmosensor regulating sodium ion levels in various tissues and organs. While most sodium channels are voltage-gated, SCN7A is not and lets sodium flow through membrane along its concentration gradient. In glial cells of the central nervous system, senses body-fluid sodium levels and controls salt intake behavior as well as voluntary water intake through activation of nearby neurons to maintain appropriate sodium levels in the body. By mediating sodium influx into keratinocytes, also plays a role in skin barrier homeostasis. The chain is Sodium channel protein type 7 subunit alpha from Rattus norvegicus (Rat).